A 408-amino-acid chain; its full sequence is Protein SLX4IP (408 aa).

Residues Lys61 and Lys79 each participate in a glycyl lysine isopeptide (Lys-Gly) (interchain with G-Cter in SUMO2) cross-link. Residue Ser130 is modified to Phosphoserine. Residues Lys167 and Lys176 each participate in a glycyl lysine isopeptide (Lys-Gly) (interchain with G-Cter in SUMO2) cross-link. Residues Thr173–Ile226 are disordered. A compositionally biased stretch (polar residues) spans Gly208–Met219. Ser213 bears the Phosphoserine mark. Glycyl lysine isopeptide (Lys-Gly) (interchain with G-Cter in SUMO2) cross-links involve residues Lys239 and Lys242. Positions Val243–Gln255 are enriched in polar residues. A disordered region spans residues Val243–Leu313. Glycyl lysine isopeptide (Lys-Gly) (interchain with G-Cter in SUMO2) cross-links involve residues Lys256, Lys291, Lys347, Lys356, and Lys372. The disordered stretch occupies residues Leu365–His408. A compositionally biased stretch (polar residues) spans Asn374–Pro397. Thr392 is subject to Phosphothreonine. Basic residues predominate over residues Thr398–His408. A Glycyl lysine isopeptide (Lys-Gly) (interchain with G-Cter in SUMO2) cross-link involves residue Lys399.

This sequence belongs to the SLX4IP family. In terms of assembly, interacts with SLX4/BTBD12; subunit of different structure-specific endonucleases.

The chain is Protein SLX4IP (SLX4IP) from Homo sapiens (Human).